We begin with the raw amino-acid sequence, 89 residues long: Small ribosomal subunit protein bS20 (89 aa).

A disordered region spans residues 1–28; the sequence is MANHYSALKRARQTETRTARNRANTSRM.

This sequence belongs to the bacterial ribosomal protein bS20 family.

In terms of biological role, binds directly to 16S ribosomal RNA. The sequence is that of Small ribosomal subunit protein bS20 from Koribacter versatilis (strain Ellin345).